A 344-amino-acid polypeptide reads, in one-letter code: GTPase Obg (344 aa).

Residues 1-159 (MKFLDEAKVY…MWLILRLKLI (159 aa)) enclose the Obg domain. The OBG-type G domain occupies 160–327 (ADAGLVGLPN…ALRAIQAQLD (168 aa)). Residues 166-173 (GLPNAGKS), 191-195 (FTTLH), 212-215 (DIPG), 279-282 (SKAD), and 308-310 (SAA) contribute to the GTP site. Residues serine 173 and threonine 193 each contribute to the Mg(2+) site.

Belongs to the TRAFAC class OBG-HflX-like GTPase superfamily. OBG GTPase family. Monomer. Mg(2+) serves as cofactor.

The protein localises to the cytoplasm. In terms of biological role, an essential GTPase which binds GTP, GDP and possibly (p)ppGpp with moderate affinity, with high nucleotide exchange rates and a fairly low GTP hydrolysis rate. Plays a role in control of the cell cycle, stress response, ribosome biogenesis and in those bacteria that undergo differentiation, in morphogenesis control. In Methylorubrum populi (strain ATCC BAA-705 / NCIMB 13946 / BJ001) (Methylobacterium populi), this protein is GTPase Obg.